A 196-amino-acid polypeptide reads, in one-letter code: Heat shock protein beta-8 (196 aa).

The tract at residues Met1 to Phe35 is disordered. Ser24 and Ser57 each carry phosphoserine. At Thr63 the chain carries Phosphothreonine. Arg71 and Arg78 each carry asymmetric dimethylarginine. A sHSP domain is found at Thr74–Glu185. Phosphoserine is present on Ser87. The segment at Pro176–Thr196 is disordered. The segment covering Gly178–Thr196 has biased composition (polar residues).

This sequence belongs to the small heat shock protein (HSP20) family. As to quaternary structure, monomer. Forms a ternary complex with BAG3 and HSPA1A. Component of the chaperone-assisted selective autophagy (CASA) complex consisting of BAG3, HSPA8/HSC70, HSPB8 and STUB1/CHIP. Interacts with HSPB1. Interacts with DNAJB6. Interacts with BAG3. In terms of processing, phosphorylated.

The protein localises to the cytoplasm. It localises to the nucleus. In terms of biological role, involved in the chaperone-assisted selective autophagy (CASA), a crucial process for protein quality control, particularly in mechanical strained cells and tissues such as muscle. Displays temperature-dependent chaperone activity. The sequence is that of Heat shock protein beta-8 (HSPB8) from Canis lupus familiaris (Dog).